We begin with the raw amino-acid sequence, 187 residues long: Protein GrpE (187 aa).

The interval Met-1 to Asp-26 is disordered.

The protein belongs to the GrpE family. In terms of assembly, homodimer.

It is found in the cytoplasm. Functionally, participates actively in the response to hyperosmotic and heat shock by preventing the aggregation of stress-denatured proteins, in association with DnaK and GrpE. It is the nucleotide exchange factor for DnaK and may function as a thermosensor. Unfolded proteins bind initially to DnaJ; upon interaction with the DnaJ-bound protein, DnaK hydrolyzes its bound ATP, resulting in the formation of a stable complex. GrpE releases ADP from DnaK; ATP binding to DnaK triggers the release of the substrate protein, thus completing the reaction cycle. Several rounds of ATP-dependent interactions between DnaJ, DnaK and GrpE are required for fully efficient folding. The chain is Protein GrpE from Methylocella silvestris (strain DSM 15510 / CIP 108128 / LMG 27833 / NCIMB 13906 / BL2).